The following is a 61-amino-acid chain: Early 3 Conserved Region 1-alpha protein (61 aa).

The Lumenal segment spans residues 1–14 (MSNSSNSTSLSNFS). Asn3, Asn6, and Asn12 each carry an N-linked (GlcNAc...) asparagine; by host glycan. The helical transmembrane segment at 15 to 35 (GIGVGVILTLVILFILILALL) threads the bilayer. Residues 36-61 (CLRVAACCTHVCTYCQLFKRWGQHPR) lie on the Cytoplasmic side of the membrane.

Belongs to the adenoviridae E3-CR1 family. Interacts with E3 RID alpha and E3 RID beta. Only 1 of 3 three potential glycosylation sites is glycosylated. Oligosaccharides are not processed from high mannose to the complex type because the protein is retained in the endoplasmic reticulum.

It is found in the host endoplasmic reticulum membrane. The protein localises to the host cell membrane. Functionally, prevents infected cell apoptosis induced by the host immune system. May act by down-regulating host TRAIL receptors. May act in complex with E3 RID alpha and beta. May play a role on cellular apoptosis regulation in the ER. The protein is Early 3 Conserved Region 1-alpha protein of Human adenovirus C serotype 2 (HAdV-2).